The primary structure comprises 183 residues: Holliday junction branch migration complex subunit RuvA (183 aa).

The tract at residues 1-63 (MTVGLIGVVE…EDAHLLYGFL (63 aa)) is domain I. The domain II stretch occupies residues 64-141 (EESEKILFER…IQDETKPVHN (78 aa)). A region of interest (flexible linker) is located at residue asparagine 141. The interval 141–183 (NEAFLALESLGFKSAEINPILKKLKPNLSVEEAIKEALQQLRS) is domain III.

This sequence belongs to the RuvA family. Homotetramer. Forms an RuvA(8)-RuvB(12)-Holliday junction (HJ) complex. HJ DNA is sandwiched between 2 RuvA tetramers; dsDNA enters through RuvA and exits via RuvB. An RuvB hexamer assembles on each DNA strand where it exits the tetramer. Each RuvB hexamer is contacted by two RuvA subunits (via domain III) on 2 adjacent RuvB subunits; this complex drives branch migration. In the full resolvosome a probable DNA-RuvA(4)-RuvB(12)-RuvC(2) complex forms which resolves the HJ.

It localises to the cytoplasm. The RuvA-RuvB-RuvC complex processes Holliday junction (HJ) DNA during genetic recombination and DNA repair, while the RuvA-RuvB complex plays an important role in the rescue of blocked DNA replication forks via replication fork reversal (RFR). RuvA specifically binds to HJ cruciform DNA, conferring on it an open structure. The RuvB hexamer acts as an ATP-dependent pump, pulling dsDNA into and through the RuvAB complex. HJ branch migration allows RuvC to scan DNA until it finds its consensus sequence, where it cleaves and resolves the cruciform DNA. This Helicobacter acinonychis (strain Sheeba) protein is Holliday junction branch migration complex subunit RuvA.